The primary structure comprises 551 residues: Probable terpene synthase 8 (551 aa).

Residues Asp-307, Asp-311, and Glu-457 each contribute to the Mg(2+) site. The DDXXD motif signature appears at 307–311; sequence DDTYD.

Belongs to the terpene synthase family. Mg(2+) serves as cofactor.

Probable sesquiterpene synthase. The sequence is that of Probable terpene synthase 8 (TPS8) from Ricinus communis (Castor bean).